The sequence spans 309 residues: Ankyrin repeat and SOCS box protein 12 (309 aa).

ANK repeat units follow at residues 63-92 (VPGT…DVDS), 96-125 (KAQT…SPGG), 129-158 (NNCS…EANV), 171-200 (SCSG…DPDY), and 213-243 (RPRT…NIYL). The region spanning 268–308 (PRSLLSQVRLVVRRALCQAGQPQAINQLDIPPMLISYLKHQ) is the SOCS box domain.

The protein belongs to the ankyrin SOCS box (ASB) family. Interacts with CUL5 and RNF7.

The protein operates within protein modification; protein ubiquitination. Probable substrate-recognition component of a SCF-like ECS (Elongin-Cullin-SOCS-box protein) E3 ubiquitin-protein ligase complex which mediates the ubiquitination and subsequent proteasomal degradation of target proteins. This Homo sapiens (Human) protein is Ankyrin repeat and SOCS box protein 12 (ASB12).